A 205-amino-acid polypeptide reads, in one-letter code: Probable molybdenum cofactor guanylyltransferase (205 aa).

Residues 9-11 (LAG), lysine 21, aspartate 66, and aspartate 95 each bind GTP. Aspartate 95 contributes to the Mg(2+) binding site.

Belongs to the MobA family. It depends on Mg(2+) as a cofactor.

Its subcellular location is the cytoplasm. The catalysed reaction is Mo-molybdopterin + GTP + H(+) = Mo-molybdopterin guanine dinucleotide + diphosphate. Transfers a GMP moiety from GTP to Mo-molybdopterin (Mo-MPT) cofactor (Moco or molybdenum cofactor) to form Mo-molybdopterin guanine dinucleotide (Mo-MGD) cofactor. The polypeptide is Probable molybdenum cofactor guanylyltransferase (Pelotomaculum thermopropionicum (strain DSM 13744 / JCM 10971 / SI)).